The sequence spans 328 residues: Beta-ketoacyl-[acyl-carrier-protein] synthase III (328 aa).

Active-site residues include cysteine 122 and histidine 255. Residues 256-260 (QANVR) are ACP-binding. The active site involves asparagine 285.

This sequence belongs to the thiolase-like superfamily. FabH family. As to quaternary structure, homodimer.

The protein resides in the cytoplasm. It catalyses the reaction malonyl-[ACP] + acetyl-CoA + H(+) = 3-oxobutanoyl-[ACP] + CO2 + CoA. The protein operates within lipid metabolism; fatty acid biosynthesis. Catalyzes the condensation reaction of fatty acid synthesis by the addition to an acyl acceptor of two carbons from malonyl-ACP. Catalyzes the first condensation reaction which initiates fatty acid synthesis and may therefore play a role in governing the total rate of fatty acid production. Possesses both acetoacetyl-ACP synthase and acetyl transacylase activities. Its substrate specificity determines the biosynthesis of branched-chain and/or straight-chain of fatty acids. The polypeptide is Beta-ketoacyl-[acyl-carrier-protein] synthase III (Bordetella petrii (strain ATCC BAA-461 / DSM 12804 / CCUG 43448)).